We begin with the raw amino-acid sequence, 507 residues long: Glycosyltransferase family 92 protein C33H5.2 (507 aa).

Residues 6-26 (VILVFCASFALFFTFIIFGRY) form a helical membrane-spanning segment. The 290-residue stretch at 155–444 (RDVVMCIAPL…LKCYNEKFYD (290 aa)) folds into the GT92 domain.

Belongs to the glycosyltransferase 92 family.

It localises to the membrane. This is Glycosyltransferase family 92 protein C33H5.2 from Caenorhabditis elegans.